Consider the following 1133-residue polypeptide: MEIEFIQNLEKFCIGLQSNKSNERETSEQSILTLMKTPQPYKLCFNLLSKSNLTIAHFYGLLMIRDSAIREWAALDSQTKIMIIETLFQYIENMNSMNFLNYATKGQSFNTLGVIIKRSWLDNEKYEIGKGQMELNQIVMDRVYQYIDSGSPDRIEISIKIIGSLIIEFSSSSKAAHIQLSWEFHQKCLITFQNLHLQPIFRKVLELLQQFKDHIQQVPSRLTDQSFLQILYTSVKVFTDILDWRFLESGSSVLAYITSFSGGRTNLKPTIEWISLFTPSQSGGGISPIVSLVFGLYQLVEKVEKIPNLLRHAMSQLCGLQGPIIKDQKIKNQYLSEVLTFTNKLIEKSITTRNWNEMEDISNIIYKFCNTYKFSGIACLPNQIVIPFLQYTTQFVLSSLNLMKIWAKHGEEELEEEFENDCFDILLRSFVSLISDAEMLINRKRVDQLENFKEQYQVLKQCTSQIYQNYIQSRLELSEIEINKSNEELEPTCKSRGGIGGAEDEIDEDKKKYDEQLRSVAYIGRLNPGQSLELLKNEINRVINSLKERVSDPILFESLHWLLIFAGHLIFDAENKTPSAIPNAIEDYTFEQCKLTPASQVDGVIDLCNAVFRFHMEYENPLLNNGKMDTISPLVSQTSLWFTSGWSLVYLLPSSVFNVQISPKIIEAYGTEQPLLSITDYFINKILLNLKCWSGDLDVLKATSNLLNSFTLNKELCKYLIRSPNWSRLFFLEGISLLPPSVYGQLFKAFSRVVFSFPLSTRREYFIQLVKTLVEQMDGVLGRADFTKISQEAKIKENIYILLEKLNGIVSVSESEYVDDEDDCLFLTVDLFTKYATSLIAMIPLYDHCNDIVLLILRLFSNFTKHQLEYLNQDRARSIFPLIIQLFNSVATTSSHKKTLDSKEYYHRVRMMVKILTNIITFGDQRNNCPTIISETIFHAINIITPCLSNNDLLLYPKLARNYFMITSFLFGADNIQVKNIPVINTIYSLIEAGILHHDLEIVKSCFECIGCLTKSLENSKEKSGGLVDPHYQSVLIQFIGSVINFLLLQDFNVDELLSVASETLFSLMYSSPDGYRSKVIELITRQDPSIQSRVVQQFETLTIIGTDRKSKDLFMKNLQNFLVNVKSLINKK.

This sequence belongs to the exportin family. As to quaternary structure, interacts with Ran and cargo proteins in a GTP-dependent manner.

It localises to the cytoplasm. The protein localises to the nucleus. Mediates the nuclear export of proteins (cargos). In the nucleus binds cooperatively to its cargo and to the GTPase Ran in its active GTP-bound form. Docking of this trimeric complex to the nuclear pore complex (NPC) is mediated through binding to nucleoporins. Upon transit of a nuclear export complex into the cytoplasm, disassembling of the complex and hydrolysis of Ran-GTP to Ran-GDP cause release of the cargo from the export receptor. Xpo4 then return to the nuclear compartment and mediate another round of transport. The directionality of nuclear export is thought to be conferred by an asymmetric distribution of the GTP- and GDP-bound forms of Ran between the cytoplasm and nucleus. The sequence is that of Exportin-4 (xpo4) from Dictyostelium discoideum (Social amoeba).